The primary structure comprises 138 residues: Aspartate 1-decarboxylase (138 aa).

Ser25 functions as the Schiff-base intermediate with substrate; via pyruvic acid in the catalytic mechanism. Ser25 bears the Pyruvic acid (Ser) mark. Thr57 is a substrate binding site. Catalysis depends on Tyr58, which acts as the Proton donor. 73–75 (GAA) is a substrate binding site. The tract at residues 117 to 138 (VDADPTAPPAPGLERSPLAEPV) is disordered.

It belongs to the PanD family. As to quaternary structure, heterooctamer of four alpha and four beta subunits. The cofactor is pyruvate. Post-translationally, is synthesized initially as an inactive proenzyme, which is activated by self-cleavage at a specific serine bond to produce a beta-subunit with a hydroxyl group at its C-terminus and an alpha-subunit with a pyruvoyl group at its N-terminus.

It localises to the cytoplasm. The enzyme catalyses L-aspartate + H(+) = beta-alanine + CO2. Its pathway is cofactor biosynthesis; (R)-pantothenate biosynthesis; beta-alanine from L-aspartate: step 1/1. Its function is as follows. Catalyzes the pyruvoyl-dependent decarboxylation of aspartate to produce beta-alanine. This chain is Aspartate 1-decarboxylase, found in Clavibacter michiganensis subsp. michiganensis (strain NCPPB 382).